The chain runs to 159 residues: MTKLDFKAVLKQHHTVRLHQTAQDWKQAIQLCIHPLIAAKLVQPAYFDDILKSVAQYGPYFIIAENVAMPHAQNNGTVQQNCFSLVTLKEPVYFDNDPRPVRLLIGLAATSAAIHTTEALPQIAALVEDTQVVKDLLDCCDETSLFAVIDRVNLHKYLT.

Positions valine 9–valine 152 constitute a PTS EIIA type-2 domain. The active-site Tele-phosphohistidine intermediate is the histidine 71. Phosphohistidine is present on histidine 71.

It is found in the cytoplasm. In terms of biological role, the phosphoenolpyruvate-dependent sugar phosphotransferase system (sugar PTS), a major carbohydrate active transport system, catalyzes the phosphorylation of incoming sugar substrates concomitantly with their translocation across the cell membrane. The enzyme II UlaABC PTS system is involved in ascorbate transport. This is Ascorbate-specific PTS system EIIA component (ulaC) from Mycoplasma pneumoniae (strain ATCC 29342 / M129 / Subtype 1) (Mycoplasmoides pneumoniae).